A 238-amino-acid polypeptide reads, in one-letter code: Purine nucleoside phosphorylase DeoD-type (238 aa).

His-4 lines the a purine D-ribonucleoside pocket. Residues Gly-20, Arg-24, Arg-43, and 87-90 (RVGT) each bind phosphate. Residues 179-181 (EME) and 203-204 (SN) each bind a purine D-ribonucleoside.

The protein belongs to the PNP/UDP phosphorylase family. In terms of assembly, homohexamer; trimer of homodimers.

It catalyses the reaction a purine D-ribonucleoside + phosphate = a purine nucleobase + alpha-D-ribose 1-phosphate. The enzyme catalyses a purine 2'-deoxy-D-ribonucleoside + phosphate = a purine nucleobase + 2-deoxy-alpha-D-ribose 1-phosphate. Its function is as follows. Catalyzes the reversible phosphorolytic breakdown of the N-glycosidic bond in the beta-(deoxy)ribonucleoside molecules, with the formation of the corresponding free purine bases and pentose-1-phosphate. This chain is Purine nucleoside phosphorylase DeoD-type, found in Lacticaseibacillus casei (strain BL23) (Lactobacillus casei).